We begin with the raw amino-acid sequence, 274 residues long: Speedy protein C (274 aa).

The tract at residues 37-169 (HQEVQAFLSL…FHWAWTRDRR (133 aa)) is speedy/Ringo box; Required for CDK-binding.

This sequence belongs to the Speedy/Ringo family. Interacts with CDK1 and CDK2. Interacts with AURKB. As to expression, expressed in a variety of tissues including bone marrow, kidney, small intestine, liver, placenta and testis.

The protein resides in the cytoplasm. Functionally, promotes progression through the cell cycle via binding and activation of CDK1 and CDK2. Involved in the spindle-assembly checkpoint. Required for recruitment of MAD2L1, BUBR1 and BUB1 to kinetochores. Required for the correct localization of the active form of Aurora B in prometaphase. This Homo sapiens (Human) protein is Speedy protein C.